The chain runs to 232 residues: H-2 class II histocompatibility antigen, E-S beta chain (232 aa).

Positions 1-90 (WFLEYSTSEC…LDKFLVPRRV (90 aa)) are beta-1. The Extracellular portion of the chain corresponds to 1–193 (WFLEYSTSEC…KAQSTSAQNK (193 aa)). 2 cysteine pairs are disulfide-bonded: cysteine 10/cysteine 74 and cysteine 112/cysteine 168. Residue asparagine 14 is glycosylated (N-linked (GlcNAc...) asparagine). The segment at 91–193 (EPTVTVYPTK…KAQSTSAQNK (103 aa)) is beta-2. The region spanning 92–182 (PTVTVYPTKT…PSLTDPVTVE (91 aa)) is the Ig-like C1-type domain. Residues 194-216 (MLSGVGGFVLGLLFLGAGLFIYF) form a helical membrane-spanning segment. Over 217–232 (RNQKGQSGLQPTGLLS) the chain is Cytoplasmic.

It belongs to the MHC class II family. In terms of processing, ubiquitinated in immature dendritic cells leading to down-regulation of MHC class II.

The protein localises to the membrane. The protein is H-2 class II histocompatibility antigen, E-S beta chain (H2-Eb1) of Mus musculus (Mouse).